The primary structure comprises 449 residues: Glucose-6-phosphate isomerase (449 aa).

Residue glutamate 291 is the Proton donor of the active site. Residues histidine 312 and lysine 426 contribute to the active site.

The protein belongs to the GPI family.

Its subcellular location is the cytoplasm. The catalysed reaction is alpha-D-glucose 6-phosphate = beta-D-fructose 6-phosphate. The protein operates within carbohydrate biosynthesis; gluconeogenesis. It participates in carbohydrate degradation; glycolysis; D-glyceraldehyde 3-phosphate and glycerone phosphate from D-glucose: step 2/4. Catalyzes the reversible isomerization of glucose-6-phosphate to fructose-6-phosphate. The chain is Glucose-6-phosphate isomerase from Streptococcus pyogenes serotype M4 (strain MGAS10750).